The sequence spans 248 residues: Tropomyosin alpha-4 chain (248 aa).

An N-acetylalanine modification is found at Ala2. Residues 2-248 are a coiled coil; it reads AGLNSLEAVK…DQTLNELNCI (247 aa). Ser6 bears the Phosphoserine mark. The segment at 15–47 is disordered; that stretch reads QALQQQADEAEDRAQGLQRELDGERERREKAEG. Positions 33–47 are enriched in basic and acidic residues; the sequence is RELDGERERREKAEG. N6-acetyllysine is present on residues Lys177 and Lys215. Thr216 is subject to Phosphothreonine.

The protein belongs to the tropomyosin family. As to quaternary structure, homodimer. Heterodimer of an alpha (TPM1, TPM3 or TPM4) and a beta (TPM2) chain. Detected in cardiac tissue and platelets, the form found in cardiac tissue is a higher molecular weight than the form found in platelets. Expressed at higher levels in the platelets of hypertensive patients with cardiac hypertrophy than in the platelets of hypertensive patients without cardiac hypertrophy (at protein level).

Its subcellular location is the cytoplasm. The protein resides in the cytoskeleton. Its function is as follows. Binds to actin filaments in muscle and non-muscle cells. Plays a central role, in association with the troponin complex, in the calcium dependent regulation of vertebrate striated muscle contraction. Smooth muscle contraction is regulated by interaction with caldesmon. In non-muscle cells is implicated in stabilizing cytoskeleton actin filaments. Binds calcium. Plays a role in platelet biogenesis. The protein is Tropomyosin alpha-4 chain (TPM4) of Homo sapiens (Human).